The following is a 118-amino-acid chain: Large ribosomal subunit protein bL19 (118 aa).

It belongs to the bacterial ribosomal protein bL19 family.

Functionally, this protein is located at the 30S-50S ribosomal subunit interface and may play a role in the structure and function of the aminoacyl-tRNA binding site. In Salinispora tropica (strain ATCC BAA-916 / DSM 44818 / JCM 13857 / NBRC 105044 / CNB-440), this protein is Large ribosomal subunit protein bL19.